An 851-amino-acid chain; its full sequence is DNA mismatch repair protein MutS (851 aa).

602 to 609 (GPNMSGKS) serves as a coordination point for ATP.

Belongs to the DNA mismatch repair MutS family.

Functionally, this protein is involved in the repair of mismatches in DNA. It is possible that it carries out the mismatch recognition step. This protein has a weak ATPase activity. The protein is DNA mismatch repair protein MutS of Streptococcus pyogenes serotype M2 (strain MGAS10270).